Here is a 605-residue protein sequence, read N- to C-terminus: Tyrosyl-DNA phosphodiesterase 1 (605 aa).

Positions Arg81–Pro86 match the Nuclear localization signal motif. His236 acts as the Nucleophile in catalysis. Position 238 (Lys238) interacts with substrate. The segment at Ser379–Ser382 is interaction with DNA. Residue His466 is the Proton donor/acceptor of the active site. Substrate is bound at residue Lys468.

It belongs to the tyrosyl-DNA phosphodiesterase family. In terms of tissue distribution, ubiquitous, with a low level in roots.

The protein resides in the nucleus. Inhibited by vanadate analogs. Its function is as follows. DNA repair enzyme that can remove a variety of covalent adducts from DNA through hydrolysis of a 3'-phosphodiester bond, giving rise to DNA with a free 3' phosphate. Catalyzes the hydrolysis of dead-end complexes between DNA and the topoisomerase I active site tyrosine residue. This Arabidopsis thaliana (Mouse-ear cress) protein is Tyrosyl-DNA phosphodiesterase 1.